We begin with the raw amino-acid sequence, 294 residues long: Mating type protein mtA-1 (294 aa).

Positions 46 to 101 (TAKKKVNGFMGFRSNYSPLFSYLPQKMRSPFMTILWQYDPYHNEWDFMCSVYSSIR) form a DNA-binding region, alpha box.

Belongs to the MATALPHA1 family.

It localises to the nucleus. Mating type proteins are sequence specific DNA-binding proteins that act as master switches in fungal differentiation by controlling gene expression in a cell type-specific fashion. Transcriptional activator that induces the transcription of alpha-specific genes. This Sordaria equina protein is Mating type protein mtA-1 (MTA1).